We begin with the raw amino-acid sequence, 316 residues long: 4-hydroxy-3-methylbut-2-enyl diphosphate reductase (316 aa).

[4Fe-4S] cluster is bound at residue C12. The (2E)-4-hydroxy-3-methylbut-2-enyl diphosphate site is built by H41 and H74. 2 residues coordinate dimethylallyl diphosphate: H41 and H74. Positions 41 and 74 each coordinate isopentenyl diphosphate. C96 serves as a coordination point for [4Fe-4S] cluster. H124 serves as a coordination point for (2E)-4-hydroxy-3-methylbut-2-enyl diphosphate. H124 serves as a coordination point for dimethylallyl diphosphate. H124 is a binding site for isopentenyl diphosphate. E126 acts as the Proton donor in catalysis. T167 is a (2E)-4-hydroxy-3-methylbut-2-enyl diphosphate binding site. C197 is a binding site for [4Fe-4S] cluster. Residues S225, S226, N227, and S269 each coordinate (2E)-4-hydroxy-3-methylbut-2-enyl diphosphate. Residues S225, S226, N227, and S269 each coordinate dimethylallyl diphosphate. Isopentenyl diphosphate contacts are provided by S225, S226, N227, and S269.

The protein belongs to the IspH family. Homodimer. [4Fe-4S] cluster serves as cofactor.

It carries out the reaction isopentenyl diphosphate + 2 oxidized [2Fe-2S]-[ferredoxin] + H2O = (2E)-4-hydroxy-3-methylbut-2-enyl diphosphate + 2 reduced [2Fe-2S]-[ferredoxin] + 2 H(+). The enzyme catalyses dimethylallyl diphosphate + 2 oxidized [2Fe-2S]-[ferredoxin] + H2O = (2E)-4-hydroxy-3-methylbut-2-enyl diphosphate + 2 reduced [2Fe-2S]-[ferredoxin] + 2 H(+). Its pathway is isoprenoid biosynthesis; dimethylallyl diphosphate biosynthesis; dimethylallyl diphosphate from (2E)-4-hydroxy-3-methylbutenyl diphosphate: step 1/1. It participates in isoprenoid biosynthesis; isopentenyl diphosphate biosynthesis via DXP pathway; isopentenyl diphosphate from 1-deoxy-D-xylulose 5-phosphate: step 6/6. Functionally, catalyzes the conversion of 1-hydroxy-2-methyl-2-(E)-butenyl 4-diphosphate (HMBPP) into a mixture of isopentenyl diphosphate (IPP) and dimethylallyl diphosphate (DMAPP). Acts in the terminal step of the DOXP/MEP pathway for isoprenoid precursor biosynthesis. The protein is 4-hydroxy-3-methylbut-2-enyl diphosphate reductase of Klebsiella pneumoniae (strain 342).